Consider the following 711-residue polypeptide: DNA ligase (711 aa).

Positions 1–21 (MNATHRGAQADASAPAGGLPP) are disordered. Residues 10–21 (ADASAPAGGLPP) are compositionally biased toward low complexity. Residues 52–56 (DAEYD), 101–102 (SL), and Glu146 each bind NAD(+). Lys148 serves as the catalytic N6-AMP-lysine intermediate. 4 residues coordinate NAD(+): Arg169, Glu205, Lys322, and Lys346. Zn(2+) is bound by residues Cys440, Cys443, Cys458, and Cys464. The 89-residue stretch at 623–711 (RAPAPLAGKT…VGAGQPGEQS (89 aa)) folds into the BRCT domain.

The protein belongs to the NAD-dependent DNA ligase family. LigA subfamily. Mg(2+) serves as cofactor. It depends on Mn(2+) as a cofactor.

The enzyme catalyses NAD(+) + (deoxyribonucleotide)n-3'-hydroxyl + 5'-phospho-(deoxyribonucleotide)m = (deoxyribonucleotide)n+m + AMP + beta-nicotinamide D-nucleotide.. Functionally, DNA ligase that catalyzes the formation of phosphodiester linkages between 5'-phosphoryl and 3'-hydroxyl groups in double-stranded DNA using NAD as a coenzyme and as the energy source for the reaction. It is essential for DNA replication and repair of damaged DNA. The protein is DNA ligase of Cupriavidus pinatubonensis (strain JMP 134 / LMG 1197) (Cupriavidus necator (strain JMP 134)).